Reading from the N-terminus, the 89-residue chain is MAKKSKIAKLAKQRALVAKYADLRATLKAEGNYAALAELPKDSSPVRLRNRDLIDGRPRSFMRKFGMSRINFRELAHKGQIPGVKKASW.

Belongs to the universal ribosomal protein uS14 family. As to quaternary structure, part of the 30S ribosomal subunit. Contacts proteins S3 and S10.

Binds 16S rRNA, required for the assembly of 30S particles and may also be responsible for determining the conformation of the 16S rRNA at the A site. The sequence is that of Small ribosomal subunit protein uS14 from Latilactobacillus sakei subsp. sakei (strain 23K) (Lactobacillus sakei subsp. sakei).